Here is a 404-residue protein sequence, read N- to C-terminus: Probable tRNA sulfurtransferase (404 aa).

Positions 60–165 constitute a THUMP domain; sequence EPVAEALKNV…DEAAYISHEE (106 aa). Residues 183–184, 208–209, R265, G287, and Q296 each bind ATP; these read ML and HF.

This sequence belongs to the ThiI family.

The protein resides in the cytoplasm. It catalyses the reaction [ThiI sulfur-carrier protein]-S-sulfanyl-L-cysteine + a uridine in tRNA + 2 reduced [2Fe-2S]-[ferredoxin] + ATP + H(+) = [ThiI sulfur-carrier protein]-L-cysteine + a 4-thiouridine in tRNA + 2 oxidized [2Fe-2S]-[ferredoxin] + AMP + diphosphate. The enzyme catalyses [ThiS sulfur-carrier protein]-C-terminal Gly-Gly-AMP + S-sulfanyl-L-cysteinyl-[cysteine desulfurase] + AH2 = [ThiS sulfur-carrier protein]-C-terminal-Gly-aminoethanethioate + L-cysteinyl-[cysteine desulfurase] + A + AMP + 2 H(+). The protein operates within cofactor biosynthesis; thiamine diphosphate biosynthesis. Catalyzes the ATP-dependent transfer of a sulfur to tRNA to produce 4-thiouridine in position 8 of tRNAs, which functions as a near-UV photosensor. Also catalyzes the transfer of sulfur to the sulfur carrier protein ThiS, forming ThiS-thiocarboxylate. This is a step in the synthesis of thiazole, in the thiamine biosynthesis pathway. The sulfur is donated as persulfide by IscS. The chain is Probable tRNA sulfurtransferase from Streptococcus uberis (strain ATCC BAA-854 / 0140J).